The following is a 260-amino-acid chain: Hydroxyethylthiazole kinase 1 (260 aa).

Met39 provides a ligand contact to substrate. ATP contacts are provided by Arg115 and Thr160. Gly187 serves as a coordination point for substrate.

This sequence belongs to the Thz kinase family. Mg(2+) serves as cofactor.

The enzyme catalyses 5-(2-hydroxyethyl)-4-methylthiazole + ATP = 4-methyl-5-(2-phosphooxyethyl)-thiazole + ADP + H(+). It functions in the pathway cofactor biosynthesis; thiamine diphosphate biosynthesis; 4-methyl-5-(2-phosphoethyl)-thiazole from 5-(2-hydroxyethyl)-4-methylthiazole: step 1/1. Catalyzes the phosphorylation of the hydroxyl group of 4-methyl-5-beta-hydroxyethylthiazole (THZ). This chain is Hydroxyethylthiazole kinase 1, found in Streptococcus pneumoniae serotype 19F (strain G54).